Here is a 318-residue protein sequence, read N- to C-terminus: NADH-ubiquinone oxidoreductase chain 1 (318 aa).

The next 8 helical transmembrane spans lie at 2–22, 76–96, 102–122, 146–166, 171–191, 217–237, 253–273, and 294–314; these read FMIN…FLTL, TLAL…YPLI, LLFI…SGWA, LAII…STLI, YLWL…STLA, AGPF…MNAL, ETYT…FLWV, and LPLT…ASCI.

Belongs to the complex I subunit 1 family. In terms of assembly, core subunit of respiratory chain NADH dehydrogenase (Complex I) which is composed of 45 different subunits.

It localises to the mitochondrion inner membrane. The enzyme catalyses a ubiquinone + NADH + 5 H(+)(in) = a ubiquinol + NAD(+) + 4 H(+)(out). In terms of biological role, core subunit of the mitochondrial membrane respiratory chain NADH dehydrogenase (Complex I) which catalyzes electron transfer from NADH through the respiratory chain, using ubiquinone as an electron acceptor. Essential for the catalytic activity and assembly of complex I. The chain is NADH-ubiquinone oxidoreductase chain 1 (MT-ND1) from Lemur catta (Ring-tailed lemur).